The primary structure comprises 431 residues: Divergent protein kinase domain 1B (431 aa).

The Cytoplasmic segment spans residues 1–30 (MRRLRRLVHLVLLCPFSKGLQGRLPGLRVK). The May mediate ER retention signature appears at 5–6 (RR). Residues 31-51 (YVLLVWLGIFVGSWMVYVHYS) form a helical membrane-spanning segment. The Lumenal portion of the chain corresponds to 52–431 (SYSELCRGHV…WREISNTNYS (380 aa)). 2 disulfide bridges follow: Cys57-Cys94 and Cys62-Cys117.

Belongs to the DIPK family. Post-translationally, among the many cysteines in the lumenal domain, most are probably involved in disulfide bonds. In terms of tissue distribution, expressed in kidney, testis, lung, heart, stomach, intestine, pancreas, liver and salivary gland. Strongly expressed in acute pancreatitis, brain, and in peripheral endothelial cells.

Its subcellular location is the endoplasmic reticulum membrane. The sequence is that of Divergent protein kinase domain 1B (Dipk1b) from Mus musculus (Mouse).